The chain runs to 301 residues: Probable 2-(5''-triphosphoribosyl)-3'-dephosphocoenzyme-A synthase (301 aa).

The protein belongs to the CitG/MdcB family.

The enzyme catalyses 3'-dephospho-CoA + ATP = 2'-(5''-triphospho-alpha-D-ribosyl)-3'-dephospho-CoA + adenine. The polypeptide is Probable 2-(5''-triphosphoribosyl)-3'-dephosphocoenzyme-A synthase (Pectobacterium carotovorum subsp. carotovorum (strain PC1)).